Reading from the N-terminus, the 303-residue chain is Imidazoleglycerol-phosphate dehydratase (303 aa).

The protein belongs to the imidazoleglycerol-phosphate dehydratase family.

Its subcellular location is the cytoplasm. It catalyses the reaction D-erythro-1-(imidazol-4-yl)glycerol 3-phosphate = 3-(imidazol-4-yl)-2-oxopropyl phosphate + H2O. It functions in the pathway amino-acid biosynthesis; L-histidine biosynthesis; L-histidine from 5-phospho-alpha-D-ribose 1-diphosphate: step 6/9. This Neisseria gonorrhoeae (strain ATCC 700825 / FA 1090) protein is Imidazoleglycerol-phosphate dehydratase.